Reading from the N-terminus, the 732-residue chain is Beta-galactosidase 5 (732 aa).

The N-terminal stretch at 1–23 is a signal peptide; it reads MGTTILVLSKILTFLLTTMLIGS. The active-site Proton donor is the Glu-187. Glu-256 (nucleophile) is an active-site residue. An N-linked (GlcNAc...) asparagine glycan is attached at Asn-466.

Belongs to the glycosyl hydrolase 35 family. As to expression, expressed in leaves and flowers.

It is found in the secreted. It localises to the extracellular space. The protein localises to the apoplast. It catalyses the reaction Hydrolysis of terminal non-reducing beta-D-galactose residues in beta-D-galactosides.. The sequence is that of Beta-galactosidase 5 (BGAL5) from Arabidopsis thaliana (Mouse-ear cress).